Consider the following 418-residue polypeptide: Queuine tRNA-ribosyltransferase accessory subunit 2 (418 aa).

Zn(2+) is bound by residues C325, C327, C330, and H356.

It belongs to the queuine tRNA-ribosyltransferase family. QTRT2 subfamily. In terms of assembly, heterodimer of a catalytic subunit and an accessory subunit. Requires Zn(2+) as cofactor.

It is found in the cytoplasm. Its function is as follows. Non-catalytic subunit of the queuine tRNA-ribosyltransferase (TGT) that catalyzes the base-exchange of a guanine (G) residue with queuine (Q) at position 34 (anticodon wobble position) in tRNAs with GU(N) anticodons (tRNA-Asp, -Asn, -His and -Tyr), resulting in the hypermodified nucleoside queuosine (7-(((4,5-cis-dihydroxy-2-cyclopenten-1-yl)amino)methyl)-7-deazaguanosine). The protein is Queuine tRNA-ribosyltransferase accessory subunit 2 of Drosophila yakuba (Fruit fly).